A 144-amino-acid polypeptide reads, in one-letter code: L-fucose mutarotase (144 aa).

The Proton donor role is filled by histidine 22. Substrate is bound by residues aspartate 30, arginine 109, and tyrosine 131 to asparagine 133.

This sequence belongs to the RbsD / FucU family. FucU mutarotase subfamily. As to quaternary structure, homodecamer.

It localises to the cytoplasm. It catalyses the reaction alpha-L-fucose = beta-L-fucose. It participates in carbohydrate metabolism; L-fucose metabolism. In terms of biological role, involved in the anomeric conversion of L-fucose. This chain is L-fucose mutarotase, found in Haemophilus influenzae (strain PittEE).